The following is a 200-amino-acid chain: Pyrrolidone-carboxylate peptidase (200 aa).

Catalysis depends on residues E78, C141, and H165.

The protein belongs to the peptidase C15 family. Homotetramer.

The protein localises to the cytoplasm. It carries out the reaction Release of an N-terminal pyroglutamyl group from a polypeptide, the second amino acid generally not being Pro.. In terms of biological role, removes 5-oxoproline from various penultimate amino acid residues except L-proline. In Lactobacillus helveticus (strain DPC 4571), this protein is Pyrrolidone-carboxylate peptidase.